The primary structure comprises 402 residues: Multidrug resistance protein MdtH (402 aa).

At 1-12 (MSRVSQARNLGK) the chain is on the cytoplasmic side. The helical transmembrane segment at 13–33 (YFLLIDNMLVVLGFFVVFPLI) threads the bilayer. At 34–98 (SIRFVDQMGW…GFATMGIAHE (65 aa)) the chain is on the periplasmic side. The chain crosses the membrane as a helical span at residues 99–116 (PWLLWFSCFLSGLGGTLF). The Cytoplasmic portion of the chain corresponds to 117-138 (DPPRSALVVKLIRPEQRGRFFS). A helical membrane pass occupies residues 139–159 (LLMMQDSAGAVIGALLGSWLL). The Periplasmic portion of the chain corresponds to 160-164 (QYDFR). The helical transmembrane segment at 165-185 (LVCATGAILFILCALFNAWLL) threads the bilayer. The Cytoplasmic segment spans residues 186 to 213 (PAWKLSTVRTPVREGMRRVMSDKRFVTY). A helical membrane pass occupies residues 214 to 234 (VLTLAGYYMLAVQVMLMLPIM). At 235-243 (VNDIAGSPA) the chain is on the periplasmic side. The chain crosses the membrane as a helical span at residues 244 to 264 (AVKWMYAIEACLSLTLLYPIA). The Cytoplasmic segment spans residues 265–276 (RWSEKRFRLEHR). The helical transmembrane segment at 277 to 297 (LMAGLLVMSLSMIPIGMVGNL) threads the bilayer. Residues 298–299 (QQ) are Periplasmic-facing. Residues 300 to 320 (LFTLICAFYIGSVIAEPARET) traverse the membrane as a helical segment. Residues 321-339 (LSASLADARARGSYMGFSR) are Cytoplasmic-facing. The helical transmembrane segment at 340 to 360 (LGLAIGGAIGYIGGGWLFDMG) threads the bilayer. At 361-367 (KALAQPE) the chain is on the periplasmic side. The helical transmembrane segment at 368-388 (LPWMMLGIIGFITFLALGWQF) threads the bilayer. Over 389 to 402 (SHKRTPRRMLEPGA) the chain is Cytoplasmic.

It belongs to the major facilitator superfamily. DHA1 family. MdtH (TC 2.A.1.2.21) subfamily.

Its subcellular location is the cell inner membrane. This is Multidrug resistance protein MdtH from Salmonella schwarzengrund (strain CVM19633).